Consider the following 528-residue polypeptide: ADP,ATP carrier protein 1 (528 aa).

The next 12 membrane-spanning stretches (helical) occupy residues 24–44 (LKKV…YTIL), 63–83 (IPFI…LIYA), 93–113 (ALFF…PVVI), 124–144 (AFAD…IAML), 149–169 (FAVF…LMFW), 184–204 (FYAL…PAII), 220–240 (WGVS…IIAA), 284–304 (YMLL…LVEV), 327–347 (FSFW…GNVI), 356–376 (ALVT…LVIF), 381–401 (TGLV…VGAI), and 463–483 (IGAM…VWLT).

It belongs to the ADP/ATP translocase tlc family.

The protein localises to the cell membrane. In Chlamydia trachomatis serovar D (strain ATCC VR-885 / DSM 19411 / UW-3/Cx), this protein is ADP,ATP carrier protein 1 (tlcA).